The sequence spans 122 residues: Large ribosomal subunit protein uL29A (122 aa).

A coiled-coil region spans residues 10–69; it reads QLGIKQIEERAAEIKADLAALRQKKNSGDVGANDIKTAKKNLARALTVRREKILEELVEA.

Belongs to the universal ribosomal protein uL29 family. As to quaternary structure, component of the large ribosomal subunit.

The protein resides in the cytoplasm. The polypeptide is Large ribosomal subunit protein uL29A (RPL35A) (Encephalitozoon cuniculi (strain GB-M1) (Microsporidian parasite)).